The following is a 505-amino-acid chain: Betaine aldehyde dehydrogenase (505 aa).

239 to 244 lines the NAD(+) pocket; the sequence is GSTATG. Glu261 acts as the Proton acceptor in catalysis. The active-site Nucleophile is Cys296. Positions 503–505 match the Microbody targeting signal motif; sequence SKL.

It belongs to the aldehyde dehydrogenase family. In terms of assembly, homodimer.

Its subcellular location is the peroxisome. The catalysed reaction is betaine aldehyde + NAD(+) + H2O = glycine betaine + NADH + 2 H(+). Its pathway is amine and polyamine biosynthesis; betaine biosynthesis via choline pathway; betaine from betaine aldehyde: step 1/1. The sequence is that of Betaine aldehyde dehydrogenase from Hordeum vulgare (Barley).